The primary structure comprises 86 residues: Small ribosomal subunit protein bS20 (86 aa).

The disordered stretch occupies residues 1-27; sequence MANSKQAKKRAGQSEKRRQHNASRRSM.

The protein belongs to the bacterial ribosomal protein bS20 family.

Binds directly to 16S ribosomal RNA. This chain is Small ribosomal subunit protein bS20, found in Colwellia psychrerythraea (strain 34H / ATCC BAA-681) (Vibrio psychroerythus).